The chain runs to 401 residues: Nicotinate phosphoribosyltransferase (401 aa).

Phosphohistidine; by autocatalysis is present on His221.

Belongs to the NAPRTase family. Post-translationally, transiently phosphorylated on a His residue during the reaction cycle. Phosphorylation strongly increases the affinity for substrates and increases the rate of nicotinate D-ribonucleotide production. Dephosphorylation regenerates the low-affinity form of the enzyme, leading to product release.

It catalyses the reaction nicotinate + 5-phospho-alpha-D-ribose 1-diphosphate + ATP + H2O = nicotinate beta-D-ribonucleotide + ADP + phosphate + diphosphate. It participates in cofactor biosynthesis; NAD(+) biosynthesis; nicotinate D-ribonucleotide from nicotinate: step 1/1. In terms of biological role, catalyzes the synthesis of beta-nicotinate D-ribonucleotide from nicotinate and 5-phospho-D-ribose 1-phosphate at the expense of ATP. The polypeptide is Nicotinate phosphoribosyltransferase (Erwinia tasmaniensis (strain DSM 17950 / CFBP 7177 / CIP 109463 / NCPPB 4357 / Et1/99)).